The primary structure comprises 86 residues: Small ribosomal subunit protein bS20 (86 aa).

This sequence belongs to the bacterial ribosomal protein bS20 family.

Functionally, binds directly to 16S ribosomal RNA. This chain is Small ribosomal subunit protein bS20, found in Oceanobacillus iheyensis (strain DSM 14371 / CIP 107618 / JCM 11309 / KCTC 3954 / HTE831).